We begin with the raw amino-acid sequence, 512 residues long: Probable DNA ligase (512 aa).

Aspartate 217 contributes to the ATP binding site. The active-site N6-AMP-lysine intermediate is lysine 219. 6 residues coordinate ATP: arginine 224, arginine 239, glutamate 268, phenylalanine 306, arginine 377, and lysine 383.

The protein belongs to the ATP-dependent DNA ligase family. The cofactor is Mg(2+).

The enzyme catalyses ATP + (deoxyribonucleotide)n-3'-hydroxyl + 5'-phospho-(deoxyribonucleotide)m = (deoxyribonucleotide)n+m + AMP + diphosphate.. DNA ligase that seals nicks in double-stranded DNA during DNA replication, DNA recombination and DNA repair. In Beutenbergia cavernae (strain ATCC BAA-8 / DSM 12333 / CCUG 43141 / JCM 11478 / NBRC 16432 / NCIMB 13614 / HKI 0122), this protein is Probable DNA ligase.